Consider the following 457-residue polypeptide: uncharacterized protein (457 aa).

The region spanning 10–69 (ALLQGQTVTVPITALAAGGDGIARLTDGRVLFVAGAVPGDTVEARLVHLKKDHGFGKILQ) is the TRAM domain. [4Fe-4S] cluster contacts are provided by Cys-82, Cys-88, Cys-91, and Cys-170. The S-adenosyl-L-methionine site is built by Gln-294, Tyr-323, Glu-344, and Asp-387. Cys-414 (nucleophile) is an active-site residue.

Belongs to the class I-like SAM-binding methyltransferase superfamily. RNA M5U methyltransferase family.

This is an uncharacterized protein from Gloeobacter violaceus (strain ATCC 29082 / PCC 7421).